Reading from the N-terminus, the 299-residue chain is Transcription elongation factor A protein 2 (299 aa).

The TFIIS N-terminal domain maps to 5–82 (EEIARIARRL…KSWKKLLDVS (78 aa)). K57 participates in a covalent cross-link: Glycyl lysine isopeptide (Lys-Gly) (interchain with G-Cter in ubiquitin). 2 positions are modified to phosphoserine: S59 and S100. Residues 83–126 (DGKSRDQGRGTPLPTSSSKDASGTTDLSCKKPDPPRTSSTPRIT) form a disordered region. Over residues 95–109 (LPTSSSKDASGTTDL) the composition is skewed to polar residues. One can recognise a TFIIS central domain in the interval 138–254 (VRNKCREMLT…EHQMARTGGT (117 aa)). The TFIIS-type zinc finger occupies 257 to 297 (DLFTCNKCRKKNCTYTQVQTRSSDEPMTTYVVCNECGNRWK). C261, C264, C289, and C292 together coordinate Zn(2+).

Belongs to the TFS-II family. In terms of assembly, interacts with the basal transcription factor GTF2B. Interacts with REXO1. Testis specific.

It localises to the nucleus. In terms of biological role, necessary for efficient RNA polymerase II transcription elongation past template-encoded arresting sites. The arresting sites in DNA have the property of trapping a certain fraction of elongating RNA polymerases that pass through, resulting in locked ternary complexes. Cleavage of the nascent transcript by S-II allows the resumption of elongation from the new 3'-terminus. The polypeptide is Transcription elongation factor A protein 2 (Tcea2) (Rattus norvegicus (Rat)).